Here is a 353-residue protein sequence, read N- to C-terminus: Protein RecA (353 aa).

Residue 67 to 74 (GPESSGKT) participates in ATP binding. Positions 330-353 (SNPNSTPDFSVDDSEGVAETNEDF) are disordered. Over residues 339–353 (SVDDSEGVAETNEDF) the composition is skewed to acidic residues.

It belongs to the RecA family.

It localises to the cytoplasm. Its function is as follows. Can catalyze the hydrolysis of ATP in the presence of single-stranded DNA, the ATP-dependent uptake of single-stranded DNA by duplex DNA, and the ATP-dependent hybridization of homologous single-stranded DNAs. It interacts with LexA causing its activation and leading to its autocatalytic cleavage. The chain is Protein RecA from Escherichia coli O157:H7 (strain EC4115 / EHEC).